The sequence spans 143 residues: uncharacterized protein (143 aa).

This sequence to E.coli YifN.

This is an uncharacterized protein from Haemophilus influenzae (strain ATCC 51907 / DSM 11121 / KW20 / Rd).